Consider the following 418-residue polypeptide: UDP-N-acetylglucosamine 1-carboxyvinyltransferase (418 aa).

23–24 serves as a coordination point for phosphoenolpyruvate; the sequence is KN. Position 93 (R93) interacts with UDP-N-acetyl-alpha-D-glucosamine. D117 acts as the Proton donor in catalysis. The UDP-N-acetyl-alpha-D-glucosamine site is built by D305 and I327.

This sequence belongs to the EPSP synthase family. MurA subfamily.

It localises to the cytoplasm. The catalysed reaction is phosphoenolpyruvate + UDP-N-acetyl-alpha-D-glucosamine = UDP-N-acetyl-3-O-(1-carboxyvinyl)-alpha-D-glucosamine + phosphate. Its pathway is cell wall biogenesis; peptidoglycan biosynthesis. Its function is as follows. Cell wall formation. Adds enolpyruvyl to UDP-N-acetylglucosamine. The polypeptide is UDP-N-acetylglucosamine 1-carboxyvinyltransferase (Corynebacterium jeikeium (strain K411)).